The primary structure comprises 122 residues: MIQPQTHLNVADNSGARELMCIRIIGASNRRYAHIGDVIVAVIKEAVPNTPLERSEVIRAVIVRTCKELRRDNGMIIRYDDNAAVVIDHEGNPKGTRVFGAIARELRQLNFTKIVSLAPEVL.

It belongs to the universal ribosomal protein uL14 family. In terms of assembly, part of the 50S ribosomal subunit.

The protein resides in the plastid. It is found in the chloroplast. In terms of biological role, binds to 23S rRNA. In Citrus sinensis (Sweet orange), this protein is Large ribosomal subunit protein uL14c.